Reading from the N-terminus, the 377-residue chain is MSNIAKGLEGVLFTESKLTFINGSEGILTHLGIPIQEWAEKSTFEELSLALLDAKLPTAEELAKFDAELKANRAIPDQLVGIIRDMPKGVHPMQALRTAVSYLGLLDPQAEDITPEARRAISTRMIAQFSTIIAAINRAQEGQDIVAPRADLTHAGNFLYMLTGNEPTPEQARLFDIALVLHADHGMNASTFTAIATSSTLSDMYSCMVSAIGALKGPLHGGANEAVMTMLDEIGTVDKAEAYITGKLDNKEKIMGVGHRVYKYFDPRSRVLRDYAEHVANKEGKSNYYQILEAIEKIIVDRMGAKGIYPNVDFYSGTVYSDLGIKKEYFTPIFALARISGWCASVIEYSQDNRLLRPDAEYTGARDQHYVDIKDRQ.

Catalysis depends on residues His220, His259, and Asp313.

The protein belongs to the citrate synthase family. Homodimer.

The catalysed reaction is oxaloacetate + acetyl-CoA + H2O = citrate + CoA + H(+). Its pathway is carbohydrate metabolism; tricarboxylic acid cycle; isocitrate from oxaloacetate: step 1/2. Might regulate the synthesis and function of enzymes involved in later enzymatic steps of Krebs cycle. Loss in activity results in sporulation defect. This chain is Citrate synthase (gltA), found in Deinococcus radiodurans (strain ATCC 13939 / DSM 20539 / JCM 16871 / CCUG 27074 / LMG 4051 / NBRC 15346 / NCIMB 9279 / VKM B-1422 / R1).